The chain runs to 376 residues: UDP-N-acetylglucosamine--N-acetylmuramyl-(pentapeptide) pyrophosphoryl-undecaprenol N-acetylglucosamine transferase (376 aa).

UDP-N-acetyl-alpha-D-glucosamine-binding positions include 12 to 14 (TAG), Asn126, Arg163, Ser198, and Gln296.

It belongs to the glycosyltransferase 28 family. MurG subfamily.

The protein resides in the cell membrane. The catalysed reaction is di-trans,octa-cis-undecaprenyl diphospho-N-acetyl-alpha-D-muramoyl-L-alanyl-D-glutamyl-meso-2,6-diaminopimeloyl-D-alanyl-D-alanine + UDP-N-acetyl-alpha-D-glucosamine = di-trans,octa-cis-undecaprenyl diphospho-[N-acetyl-alpha-D-glucosaminyl-(1-&gt;4)]-N-acetyl-alpha-D-muramoyl-L-alanyl-D-glutamyl-meso-2,6-diaminopimeloyl-D-alanyl-D-alanine + UDP + H(+). It participates in cell wall biogenesis; peptidoglycan biosynthesis. In terms of biological role, cell wall formation. Catalyzes the transfer of a GlcNAc subunit on undecaprenyl-pyrophosphoryl-MurNAc-pentapeptide (lipid intermediate I) to form undecaprenyl-pyrophosphoryl-MurNAc-(pentapeptide)GlcNAc (lipid intermediate II). This chain is UDP-N-acetylglucosamine--N-acetylmuramyl-(pentapeptide) pyrophosphoryl-undecaprenol N-acetylglucosamine transferase, found in Frankia casuarinae (strain DSM 45818 / CECT 9043 / HFP020203 / CcI3).